Reading from the N-terminus, the 143-residue chain is Large ribosomal subunit protein uL15 (143 aa).

The disordered stretch occupies residues 20–52; it reads GRGIGSGKGKTAGRGHKGQHSRAGGYHKVGFEG. The segment covering 30-39 has biased composition (basic residues); it reads TAGRGHKGQH.

It belongs to the universal ribosomal protein uL15 family. As to quaternary structure, part of the 50S ribosomal subunit.

Functionally, binds to the 23S rRNA. This chain is Large ribosomal subunit protein uL15, found in Coxiella burnetii (strain CbuG_Q212) (Coxiella burnetii (strain Q212)).